The sequence spans 99 residues: Large ribosomal subunit protein uL23 (99 aa).

It belongs to the universal ribosomal protein uL23 family. In terms of assembly, part of the 50S ribosomal subunit. Contacts protein L29, and trigger factor when it is bound to the ribosome.

Its function is as follows. One of the early assembly proteins it binds 23S rRNA. One of the proteins that surrounds the polypeptide exit tunnel on the outside of the ribosome. Forms the main docking site for trigger factor binding to the ribosome. The protein is Large ribosomal subunit protein uL23 of Shewanella loihica (strain ATCC BAA-1088 / PV-4).